Consider the following 904-residue polypeptide: DNA polymerase I (904 aa).

The region spanning 186–279 (TPRQYPDFAA…DTLRLQPWDR (94 aa)) is the 5'-3' exonuclease domain. The 3'-5' exonuclease domain occupies 317–493 (RGGALAPGTV…LADALDAELA (177 aa)).

The protein belongs to the DNA polymerase type-A family. As to quaternary structure, single-chain monomer with multiple functions.

The enzyme catalyses DNA(n) + a 2'-deoxyribonucleoside 5'-triphosphate = DNA(n+1) + diphosphate. In addition to polymerase activity, this DNA polymerase exhibits 3'-5' and 5'-3' exonuclease activity. The protein is DNA polymerase I (polA) of Mycobacterium bovis (strain ATCC BAA-935 / AF2122/97).